The primary structure comprises 528 residues: Drimenol cyclase drtB (528 aa).

The protein belongs to the HAD-like hydrolase superfamily.

It catalyses the reaction (2E,6E)-farnesyl diphosphate + H2O = (5S,9S,10S)-drim-7-en-11-ol + diphosphate. Its pathway is secondary metabolite biosynthesis; terpenoid biosynthesis. In terms of biological role, drimenol cyclase; part of the gene cluster that mediates the biosynthesis of various drimane-type sesquiterpene esters, compounds that exhibit diverse biological activities and are widely present in eukaryotes. The pathway begins with the synthesis of the backbone drimenol by the terpene cyclase drtB using farnesyl pyrophosphate (FPP) as substrate. The cytochrome P450 monooxygenase drtD is then responsible for the hydroxylations at C-6, C-9 and C-12, as well as the oxidation of hydroxyl groups at C-6 and C-11 to a ketone and an aldehyde, respectively. Then, the biosynthesis can go in two directions, either the hydroxylated drimenol is further hydroxylated at C-2 and C-3 by an enzyme(s) not associated with the drt cluster, or the FAD-binding oxidoreductase drtC further oxidizes C-11 or C-12 to form the butyrolactone ring. DrtB, drtD and drtC are solely responsible for the formation of the different drimane structures observed during drimane sesquiterpenes biosynthesis. The polyketide synthase drtA synthesizes different lengths (C6 and C8) of PKS chains, which are then oxidized to varying degrees by the short-chain dehydrogenase drtF. Finally, these PKS chains are transferred onto drimane sesquiterpenes by the acyltransferase drtE, forming the sesquiterpene esters. In addition to the different fatty acyl-CoA chains produced by drtA, drtE is also able to use cinnamoyl-CoA as a substrate. This chain is Drimenol cyclase drtB, found in Aspergillus calidoustus.